We begin with the raw amino-acid sequence, 394 residues long: Protein-glutamate methylesterase/protein-glutamine glutaminase (394 aa).

The interval 1 to 24 is disordered; sequence MSDGFGRPPPPAPAGHPTGAAGGD. Over residues 15–24 the composition is skewed to low complexity; it reads GHPTGAAGGD. One can recognise a Response regulatory domain in the interval 27-145; sequence RVMVVDDSAV…EIGGADAFKR (119 aa). A 4-aspartylphosphate modification is found at Asp78. The region spanning 191–393 is the CheB-type methylesterase domain; that stretch reads PAPAVGSVGQ…PYIRKFASRA (203 aa). Active-site residues include Ser211, His238, and Asp335.

It belongs to the CheB family. In terms of processing, phosphorylated by CheA. Phosphorylation of the N-terminal regulatory domain activates the methylesterase activity.

The protein resides in the cytoplasm. It carries out the reaction [protein]-L-glutamate 5-O-methyl ester + H2O = L-glutamyl-[protein] + methanol + H(+). The catalysed reaction is L-glutaminyl-[protein] + H2O = L-glutamyl-[protein] + NH4(+). In terms of biological role, involved in chemotaxis. Part of a chemotaxis signal transduction system that modulates chemotaxis in response to various stimuli. Catalyzes the demethylation of specific methylglutamate residues introduced into the chemoreceptors (methyl-accepting chemotaxis proteins or MCP) by CheR. Also mediates the irreversible deamidation of specific glutamine residues to glutamic acid. The sequence is that of Protein-glutamate methylesterase/protein-glutamine glutaminase from Azospirillum brasilense.